A 170-amino-acid polypeptide reads, in one-letter code: Acetyl-CoA decarbonylase/synthase complex subunit epsilon 2 (170 aa).

It belongs to the CdhB family. Heterotetramer of two alpha and two epsilon subunits. The ACDS complex is made up of alpha, epsilon, beta, gamma and delta subunits with a probable stoichiometry of (alpha(2)epsilon(2))(4)-beta(8)-(gamma(1)delta(1))(8).

It functions in the pathway one-carbon metabolism; methanogenesis from acetate. Functionally, part of a complex that catalyzes the reversible cleavage of acetyl-CoA, allowing growth on acetate as sole source of carbon and energy. The alpha-epsilon subcomponent functions as a carbon monoxide dehydrogenase. The precise role of the epsilon subunit is unclear; it may have a stabilizing role within the alpha(2)epsilon(2) component and/or be involved in electron transfer to FAD during a potential FAD-mediated CO oxidation. In Methanosarcina mazei (strain ATCC BAA-159 / DSM 3647 / Goe1 / Go1 / JCM 11833 / OCM 88) (Methanosarcina frisia), this protein is Acetyl-CoA decarbonylase/synthase complex subunit epsilon 2 (cdhB2).